Reading from the N-terminus, the 155-residue chain is Small ribosomal subunit protein uS7 (155 aa).

The protein belongs to the universal ribosomal protein uS7 family. As to quaternary structure, part of the 30S ribosomal subunit. Contacts proteins S9 and S11.

One of the primary rRNA binding proteins, it binds directly to 16S rRNA where it nucleates assembly of the head domain of the 30S subunit. Is located at the subunit interface close to the decoding center, probably blocks exit of the E-site tRNA. This is Small ribosomal subunit protein uS7 from Corynebacterium glutamicum (strain R).